A 453-amino-acid chain; its full sequence is Ribosome biogenesis protein SSF1 (453 aa).

Residues 1–11 (MAKRRQKKRTH) are compositionally biased toward basic residues. Disordered regions lie at residues 1-22 (MAKR…EQGI), 275-324 (KAKH…PRKK), and 374-453 (KMRL…SEVE). The region spanning 26-348 (MVIRVGQTSL…LVKIEEGICS (323 aa)) is the Brix domain. Residues 288 to 300 (PVEKKDNKEREKE) are compositionally biased toward basic and acidic residues. Threonine 301 is subject to Phosphothreonine. Basic and acidic residues predominate over residues 374-398 (KMRLKEQRKKEQEENIAKKKAVKDA). A compositionally biased stretch (basic residues) spans 399–409 (KKQRKLERRKA). The segment covering 410 to 423 (RAAEGGEGQGKDDA) has biased composition (basic and acidic residues). The segment covering 442–453 (EDLDSDLFSEVE) has biased composition (acidic residues).

In terms of assembly, part of a complex that includes BRX1, RPF1, RPF2 and SSF1 or SSF2.

Its subcellular location is the nucleus. It localises to the nucleolus. In terms of biological role, required for biogenesis of the 60S ribosomal subunit. This is Ribosome biogenesis protein SSF1 (SSF1) from Saccharomyces cerevisiae (strain ATCC 204508 / S288c) (Baker's yeast).